A 150-amino-acid chain; its full sequence is Retinal rod rhodopsin-sensitive cGMP 3',5'-cyclic phosphodiesterase subunit delta (150 aa).

The required for association with membranes stretch occupies residues 144 to 150 (RVRLFYV).

This sequence belongs to the PDE6D/unc-119 family. Interacts with the prenylated catalytic subunits of PDE6, an oligomer composed of two catalytic chains (PDE6A and PDE6B) and two inhibitory chains (gamma); has no effect on enzyme activity but promotes the release of the prenylated enzyme from cell membrane. Interacts with prenylated GRK1 and GRK7. Interacts with prenylated Ras family members, including RAP2A and RAP2C. Interacts with prenylated RHEB and NRAS. Interacts with prenylated HRAS and KRAS. Interacts with RAB13 (prenylated form); dissociates RAB13 from membranes. Interacts with prenylated INPP5E. Interacts with RAB28 (prenylated form); the interaction promotes RAB28 delivery to the photoreceptor outer segments. Interacts with RPGR. Interacts with ARL2. Interacts with ARL3; the interaction occurs specifically with the GTP-bound form of ARL3. Interaction with ARL2 and ARL3 promotes release of farnesylated cargo proteins. As to expression, widely expressed. Detected in various tissues including spleen, prostate gland, testis, ovary, small intestine, colon, retina, and peripheral blood.

It localises to the cytoplasm. It is found in the cytosol. The protein localises to the cytoplasmic vesicle membrane. Its subcellular location is the cytoskeleton. The protein resides in the cilium basal body. Promotes the release of prenylated target proteins from cellular membranes. Modulates the activity of prenylated or palmitoylated Ras family members by regulating their subcellular location. Required for normal ciliary targeting of farnesylated target proteins, such as INPP5E. Required for RAB28 localization to the cone cell outer segments in the retina. Modulates the subcellular location of target proteins by acting as a GTP specific dissociation inhibitor (GDI). Increases the affinity of ARL3 for GTP by several orders of magnitude. Stabilizes ARL3-GTP by decreasing the nucleotide dissociation rate. The sequence is that of Retinal rod rhodopsin-sensitive cGMP 3',5'-cyclic phosphodiesterase subunit delta (PDE6D) from Homo sapiens (Human).